A 453-amino-acid chain; its full sequence is UDP-N-acetylmuramoylalanine--D-glutamate ligase (453 aa).

115-121 (GTNGKTT) contacts ATP.

Belongs to the MurCDEF family.

The protein localises to the cytoplasm. It catalyses the reaction UDP-N-acetyl-alpha-D-muramoyl-L-alanine + D-glutamate + ATP = UDP-N-acetyl-alpha-D-muramoyl-L-alanyl-D-glutamate + ADP + phosphate + H(+). It participates in cell wall biogenesis; peptidoglycan biosynthesis. In terms of biological role, cell wall formation. Catalyzes the addition of glutamate to the nucleotide precursor UDP-N-acetylmuramoyl-L-alanine (UMA). The chain is UDP-N-acetylmuramoylalanine--D-glutamate ligase from Geotalea uraniireducens (strain Rf4) (Geobacter uraniireducens).